Reading from the N-terminus, the 184-residue chain is Peptidoglycan-recognition protein SC2 (184 aa).

The signal sequence occupies residues Met-1–Gly-20. Positions Ser-45 to Gly-169 constitute an N-acetylmuramoyl-L-alanine amidase domain. Position 50 (His-50) interacts with Zn(2+). Cys-57 and Cys-63 are joined by a disulfide. Residues His-159 and Cys-167 each contribute to the Zn(2+) site.

The protein belongs to the N-acetylmuramoyl-L-alanine amidase 2 family. Zn(2+) is required as a cofactor. As to expression, constitutively expressed at high level in gut, in addition to the induced expression in fat body.

The protein localises to the secreted. The enzyme catalyses Hydrolyzes the link between N-acetylmuramoyl residues and L-amino acid residues in certain cell-wall glycopeptides.. Functionally, N-acetylmuramyl-L-alanine amidase involved in innate immunity by degrading bacterial peptidoglycans (PGN). Probably plays a scavenger role by digesting biologically active PGN into biologically inactive fragments. Has no direct bacteriolytic activity. This is Peptidoglycan-recognition protein SC2 (PGRP-SC2) from Drosophila melanogaster (Fruit fly).